A 61-amino-acid chain; its full sequence is Small ribosomal subunit protein uS14B (61 aa).

The Zn(2+) site is built by Cys24, Cys27, Cys40, and Cys43.

It belongs to the universal ribosomal protein uS14 family. Zinc-binding uS14 subfamily. In terms of assembly, part of the 30S ribosomal subunit. Contacts proteins S3 and S10. The cofactor is Zn(2+).

Binds 16S rRNA, required for the assembly of 30S particles and may also be responsible for determining the conformation of the 16S rRNA at the A site. The polypeptide is Small ribosomal subunit protein uS14B (Pediococcus pentosaceus (strain ATCC 25745 / CCUG 21536 / LMG 10740 / 183-1w)).